The sequence spans 219 residues: Protein RhiB (219 aa).

Over residues Ala174–Pro195 the composition is skewed to polar residues. The segment at Ala174–Thr201 is disordered.

Functionally, may be involved in plant-microbe interaction. The chain is Protein RhiB (rhiB) from Rhizobium leguminosarum bv. viciae.